The primary structure comprises 96 residues: Large ribosomal subunit protein bL27 (96 aa).

A propeptide spanning residues 1-9 is cleaved from the precursor; the sequence is MLRLDLQFF. Positions 14–36 are disordered; that stretch reads GVGSTKNGRDSQSKRLGAKRADG.

It belongs to the bacterial ribosomal protein bL27 family. In terms of processing, the N-terminus is cleaved by ribosomal processing cysteine protease Prp.

The protein is Large ribosomal subunit protein bL27 of Bacillus anthracis (strain A0248).